The sequence spans 320 residues: Pyrroline-5-carboxylate reductase 2 (320 aa).

Ser2 bears the N-acetylserine mark. NADP(+) contacts are provided by residues 6–11 (IGAGQL) and Ser34. Positions 8, 10, 11, 34, 36, 56, 70, 71, and 97 each coordinate NADPH. NADP(+)-binding positions include Asn56, 69–72 (AVKP), and 95–97 (CAA). An L-proline-binding site is contributed by Glu164. NADPH is bound at residue Asn230. 2 residues coordinate L-proline: Ala237 and Thr238. Residues 295–305 (PTVSTLTPSSP) show a composition bias toward low complexity. The disordered stretch occupies residues 295 to 320 (PTVSTLTPSSPGKLLTRSLALGGKKD). Position 304 is a phosphoserine (Ser304).

Belongs to the pyrroline-5-carboxylate reductase family. As to quaternary structure, homodecamer; composed of 5 homodimers. Interacts with LTO1. In terms of tissue distribution, detected in erythrocytes (at protein level). Expressed in fetal brain.

The protein localises to the cytoplasm. The protein resides in the mitochondrion. The enzyme catalyses L-proline + NADP(+) = (S)-1-pyrroline-5-carboxylate + NADPH + 2 H(+). It catalyses the reaction L-proline + NAD(+) = (S)-1-pyrroline-5-carboxylate + NADH + 2 H(+). Its pathway is amino-acid biosynthesis; L-proline biosynthesis; L-proline from L-glutamate 5-semialdehyde: step 1/1. Its activity is regulated as follows. Subject to competitive inhibition by NADP. Was reported not to be inhibited by proline. However other study demonstrated an inhibition by proline. Functionally, oxidoreductase that catalyzes the last step in proline biosynthesis, which corresponds to the reduction of pyrroline-5-carboxylate to L-proline using NAD(P)H. At physiologic concentrations, has higher specific activity in the presence of NADH. Involved in cellular response to oxidative stress. In some cell types, such as erythrocytes, its primary function may be the generation of NADP(+). The protein is Pyrroline-5-carboxylate reductase 2 of Homo sapiens (Human).